The chain runs to 339 residues: DNA-directed RNA polymerase subunit alpha (339 aa).

Residues 1–233 (MVREEVAGST…DLFLPFLHAE (233 aa)) are alpha N-terminal domain (alpha-NTD). The interval 266-339 (GIPLNCIFID…IDLLKNKLSF (74 aa)) is alpha C-terminal domain (alpha-CTD).

This sequence belongs to the RNA polymerase alpha chain family. In plastids the minimal PEP RNA polymerase catalytic core is composed of four subunits: alpha, beta, beta', and beta''. When a (nuclear-encoded) sigma factor is associated with the core the holoenzyme is formed, which can initiate transcription.

It localises to the plastid. It is found in the chloroplast. The catalysed reaction is RNA(n) + a ribonucleoside 5'-triphosphate = RNA(n+1) + diphosphate. Its function is as follows. DNA-dependent RNA polymerase catalyzes the transcription of DNA into RNA using the four ribonucleoside triphosphates as substrates. This Aegilops speltoides (Goatgrass) protein is DNA-directed RNA polymerase subunit alpha.